We begin with the raw amino-acid sequence, 312 residues long: Acetaldehyde dehydrogenase (312 aa).

Residue 11–14 (SGNI) coordinates NAD(+). Cys129 acts as the Acyl-thioester intermediate in catalysis. Residues 160 to 168 (SAGPGTRAN) and Asn287 contribute to the NAD(+) site.

Belongs to the acetaldehyde dehydrogenase family.

The catalysed reaction is acetaldehyde + NAD(+) + CoA = acetyl-CoA + NADH + H(+). In Sphingobium yanoikuyae (Sphingomonas yanoikuyae), this protein is Acetaldehyde dehydrogenase (xylQ).